The following is a 573-amino-acid chain: Proline--tRNA ligase (573 aa).

It belongs to the class-II aminoacyl-tRNA synthetase family. ProS type 1 subfamily. As to quaternary structure, homodimer.

It is found in the cytoplasm. The catalysed reaction is tRNA(Pro) + L-proline + ATP = L-prolyl-tRNA(Pro) + AMP + diphosphate. In terms of biological role, catalyzes the attachment of proline to tRNA(Pro) in a two-step reaction: proline is first activated by ATP to form Pro-AMP and then transferred to the acceptor end of tRNA(Pro). As ProRS can inadvertently accommodate and process non-cognate amino acids such as alanine and cysteine, to avoid such errors it has two additional distinct editing activities against alanine. One activity is designated as 'pretransfer' editing and involves the tRNA(Pro)-independent hydrolysis of activated Ala-AMP. The other activity is designated 'posttransfer' editing and involves deacylation of mischarged Ala-tRNA(Pro). The misacylated Cys-tRNA(Pro) is not edited by ProRS. In Limosilactobacillus fermentum (strain NBRC 3956 / LMG 18251) (Lactobacillus fermentum), this protein is Proline--tRNA ligase.